The chain runs to 555 residues: Urocanate hydratase (555 aa).

NAD(+) is bound by residues 51–52, Q129, 175–177, E195, 262–266, 272–273, and Y321; these read GG, GMG, QTSAH, and YL. C409 is an active-site residue. G491 contacts NAD(+).

The protein belongs to the urocanase family. It depends on NAD(+) as a cofactor.

It is found in the cytoplasm. The enzyme catalyses 4-imidazolone-5-propanoate = trans-urocanate + H2O. The protein operates within amino-acid degradation; L-histidine degradation into L-glutamate; N-formimidoyl-L-glutamate from L-histidine: step 2/3. Its function is as follows. Catalyzes the conversion of urocanate to 4-imidazolone-5-propionate. In Xanthomonas euvesicatoria pv. vesicatoria (strain 85-10) (Xanthomonas campestris pv. vesicatoria), this protein is Urocanate hydratase.